The following is a 461-amino-acid chain: Phenolic glucoside malonyltransferase 1 (461 aa).

Catalysis depends on His-167, which acts as the Proton acceptor. Residues His-167–Asp-171 carry the HXXXD motif motif. Malonyl-CoA is bound at residue Ser-281 to Thr-282. Catalysis depends on Asp-400, which acts as the Proton acceptor. The short motif at Asp-400–Gly-404 is the DFGWG motif element.

The protein belongs to the plant acyltransferase family. Phenolic glucoside malonyltransferase subfamily. In terms of tissue distribution, expressed in all tissues. Most highly expressed in the abdomen and especially in the gut.

The catalysed reaction is a flavonol 3-O-beta-D-glucoside + malonyl-CoA = a flavonol 3-O-(6-O-malonyl-beta-D-glucoside) + CoA. It carries out the reaction kaempferol 3-O-beta-D-glucoside + malonyl-CoA = kaempferol 3-O-(6-O-malonyl-beta-D-glucoside) + CoA. The enzyme catalyses quercetin 3-O-beta-D-glucoside + malonyl-CoA = quercetin 3-O-(6-O-malonyl-beta-D-glucoside) + CoA. It catalyses the reaction a flavonol 7-O-beta-D-glucoside + malonyl-CoA = a flavonol 7-O-(6-O-malonyl-beta-D-glucoside) + CoA. The catalysed reaction is (2S)-naringenin 7-O-beta-D-glucoside + malonyl-CoA = (2S)-naringenin 7-O-(6-O-malonyl-beta-D-glucoside) + CoA. It carries out the reaction kaempferol 7-O-beta-D-glucoside + malonyl-CoA = kaempferol 7-O-(6-O-malonyl-beta-D-glucoside) + CoA. The enzyme catalyses apigenin 7-O-beta-D-glucoside + malonyl-CoA = apigenin 7-O-(6-O-malonyl-beta-D-glucoside) + CoA. It catalyses the reaction rhaponticin + malonyl-CoA = 6-O-malonyl-rhaponticin + CoA. Phenolic glucoside malonyltransferase that neutralizes phenolic glycosides in host plants. Catalyzes the transfer of a malonyl group from malonyl-CoA to the phenolic glycosides, leading to their detoxification. Phenolic glycosides, which are among the most abundant plant secondary metabolites, act as plant defense compounds: they strongly affect growth, development and behavior of insect herbivores. Has malonyltransferase activity against flavonoids kaempferol 3-O-glucoside, kaempferol 7-O-glucoside, isoquercetin (quercetin 3-O-beta-D-glucopyranoside), apigetrin (apigenin 7-O-beta-D-glucoside) and prunin (naringenin 7-O-beta-D-glucoside). Also has activity toward non-flavonoid rhaponticin, but with lower efficiency. This is Phenolic glucoside malonyltransferase 1 from Bemisia tabaci (Sweetpotato whitefly).